The chain runs to 250 residues: ATP synthase subunit a (250 aa).

Transmembrane regions (helical) follow at residues 27 to 47 (FTNAALFMFGIVAIIFFFLTF), 85 to 105 (FFPLVFSLFTFVLVSNVVGLI), 115 to 135 (LIVTAAMALLVIGTVIVYGFV), 141 to 161 (FLHLFVPSGVPAFLLPFLVVI), 181 to 201 (MLAGHIALKVFAFFVVGLASA), and 223 to 243 (ELLVAMLQAYVFAVLTSIYLN).

This sequence belongs to the ATPase A chain family. As to quaternary structure, F-type ATPases have 2 components, CF(1) - the catalytic core - and CF(0) - the membrane proton channel. CF(1) has five subunits: alpha(3), beta(3), gamma(1), delta(1), epsilon(1). CF(0) has three main subunits: a(1), b(2) and c(9-12). The alpha and beta chains form an alternating ring which encloses part of the gamma chain. CF(1) is attached to CF(0) by a central stalk formed by the gamma and epsilon chains, while a peripheral stalk is formed by the delta and b chains.

The protein localises to the cell inner membrane. In terms of biological role, key component of the proton channel; it plays a direct role in the translocation of protons across the membrane. This is ATP synthase subunit a from Xanthobacter autotrophicus (strain ATCC BAA-1158 / Py2).